The chain runs to 588 residues: Adenine deaminase (588 aa).

This sequence belongs to the metallo-dependent hydrolases superfamily. Adenine deaminase family. Homodimer. Mn(2+) is required as a cofactor.

It catalyses the reaction adenine + H2O + H(+) = hypoxanthine + NH4(+). This chain is Adenine deaminase, found in Escherichia coli O9:H4 (strain HS).